Reading from the N-terminus, the 470-residue chain is 6-phospho-beta-galactosidase (470 aa).

Residues Gln19, His116, Asn159, Glu160, and Asn297 each contribute to the D-galactose 6-phosphate site. Catalysis depends on Glu160, which acts as the Proton donor. Glu375 serves as the catalytic Nucleophile. Ser430, Trp431, Lys437, and Tyr439 together coordinate D-galactose 6-phosphate.

Belongs to the glycosyl hydrolase 1 family.

It carries out the reaction a 6-phospho-beta-D-galactoside + H2O = D-galactose 6-phosphate + an alcohol. Its pathway is carbohydrate metabolism; lactose degradation; D-galactose 6-phosphate and beta-D-glucose from lactose 6-phosphate: step 1/1. The polypeptide is 6-phospho-beta-galactosidase (Staphylococcus aureus (strain COL)).